The primary structure comprises 698 residues: Ubiquitin-like modifier-activating enzyme ATG7 (698 aa).

An FAP motif motif is present at residues 11–13 (FAP). A Glycyl lysine isopeptide (Lys-Gly) (interchain with G-Cter in ubiquitin) cross-link involves residue K41. The active-site Glycyl thioester intermediate is the C567. Position 693 is a phosphoserine (S693).

It belongs to the ATG7 family. In terms of assembly, homodimer. Interacts with ATG3; this interaction is essential for the transfer of ATG8-like proteins's thioester from ATG7 to ATG3 and plays a role in the conjugation of ATG12 to ATG5. Interacts with ATG12. Forms intermediate conjugates with GABARAPL1. Forms intermediate conjugates with ATG8-like proteins such as GABARAP, GABARAPL2 or MAP1LC3A. Interacts with EP300 acetyltransferase. Interacts with FOXO1. Acetylated by EP300. Post-translationally, polyubiquitinated on Lys-41 via 'Lys-63'-linked ubiquitin by TRIM32; this modification positiely regulates ATG8 and ATG12 activating enzyme activity leading to initiation of autophagy under metabolic stress. As to expression, widely expressed.

It is found in the cytoplasm. The protein localises to the preautophagosomal structure. Its function is as follows. E1-like activating enzyme involved in the 2 ubiquitin-like systems required for cytoplasm to vacuole transport (Cvt) and autophagy. Activates ATG12 for its conjugation with ATG5 as well as the ATG8 family proteins for their conjugation with phosphatidylethanolamine. Both systems are needed for the ATG8 association to Cvt vesicles and autophagosomes membranes. Required for autophagic death induced by caspase-8 inhibition. Facilitates LC3-I lipidation with phosphatidylethanolamine to form LC3-II which is found on autophagosomal membranes. Required for mitophagy which contributes to regulate mitochondrial quantity and quality by eliminating the mitochondria to a basal level to fulfill cellular energy requirements and preventing excess ROS production. Modulates p53/TP53 activity to regulate cell cycle and survival during metabolic stress. Also plays a key role in the maintenance of axonal homeostasis, the prevention of axonal degeneration, the maintenance of hematopoietic stem cells, the formation of Paneth cell granules, as well as in adipose differentiation. Plays a role in regulating the liver clock and glucose metabolism by mediating the autophagic degradation of CRY1 (clock repressor) in a time-dependent manner. The chain is Ubiquitin-like modifier-activating enzyme ATG7 from Rattus norvegicus (Rat).